We begin with the raw amino-acid sequence, 304 residues long: Taste receptor type 2 member 4 (304 aa).

The Extracellular segment spans residues 1-10 (MLWELYAFVF). A helical transmembrane segment spans residues 11 to 31 (AASVVFNFVGIVANLFIIVII). The Cytoplasmic segment spans residues 32-46 (SKTWVKSHKISSSDK). Residues 47–67 (ILFSLAITRFLTLGLFLLNTV) form a helical membrane-spanning segment. Topologically, residues 68 to 80 (YIATNTGRSVYFS) are extracellular. A helical membrane pass occupies residues 81–101 (TFFLLCWKFLDSNSLWLVTFL). Residues 102 to 128 (NCLYCVKITHFQHPVFLLLKRTVSMKT) are Cytoplasmic-facing. The chain crosses the membrane as a helical span at residues 129–149 (TSLLLACLLISAFTTLLYFVL). Residues 150–171 (TQISRFPEHIIGRNDTLFDVSD) are Extracellular-facing. A glycan (N-linked (GlcNAc...) asparagine) is linked at Asn-163. A helical membrane pass occupies residues 172–192 (GILTLAASLILSSLLQFLLNV). The Cytoplasmic segment spans residues 193 to 229 (TFASLLIHSLRRHVQKMQRNRSSFWNPQTEAHVGAMR). The helical transmembrane segment at 230–250 (LMICFLVLYIPYSIAALLYFP) threads the bilayer. Over 251-260 (SYMRKNLRAQ) the chain is Extracellular. A helical transmembrane segment spans residues 261 to 281 (AACMIITAAYPPGHSILLIIT). At 282–304 (HHKLKAKAKKICCFYKLRDFVSN) the chain is on the cytoplasmic side.

It belongs to the G-protein coupled receptor T2R family. In terms of tissue distribution, expressed in tongue, stomach and duodenum.

The protein localises to the membrane. Its subcellular location is the cell projection. The protein resides in the cilium membrane. In terms of biological role, gustducin-coupled receptor implicated in the perception of bitter compounds in the oral cavity and the gastrointestinal tract. Signals through PLCB2 and the calcium-regulated cation channel TRPM5. In airway epithelial cells, binding of denatonium increases the intracellular calcium ion concentration and stimulates ciliary beat frequency. This is Taste receptor type 2 member 4 from Rattus norvegicus (Rat).